An 837-amino-acid chain; its full sequence is Protein translocase subunit SecA (837 aa).

Residues Gln85, 103 to 107 (GEGKT), and Asp493 contribute to the ATP site. Cys821, Cys823, Cys832, and His833 together coordinate Zn(2+).

It belongs to the SecA family. Monomer and homodimer. Part of the essential Sec protein translocation apparatus which comprises SecA, SecYEG and auxiliary proteins SecDF. Other proteins may also be involved. Zn(2+) is required as a cofactor.

It is found in the cell membrane. It localises to the cytoplasm. It carries out the reaction ATP + H2O + cellular proteinSide 1 = ADP + phosphate + cellular proteinSide 2.. Its function is as follows. Part of the Sec protein translocase complex. Interacts with the SecYEG preprotein conducting channel. Has a central role in coupling the hydrolysis of ATP to the transfer of proteins into and across the cell membrane, serving as an ATP-driven molecular motor driving the stepwise translocation of polypeptide chains across the membrane. In Streptococcus pneumoniae serotype 2 (strain D39 / NCTC 7466), this protein is Protein translocase subunit SecA.